We begin with the raw amino-acid sequence, 476 residues long: MNSAVQAQLAELGIEGYLNQHQHKSLLRFLTCGSVDDGKSTLIGRLLHDSKQIYEDQLAAVHNDSQRVGTTGSRPDLALLVDGLQAEREQGITIDVAYRYFSTQKRKFIIADTPGHEQYTRNMATGASTCDLAVILIDARKGVLDQTRRHSFISNLLGLKHFVVAVNKMDLVEFSQQRFEEIKAEYQAFSKNLRGETDIQIIPISALEGDNVVELSQQMAWYQGPTLLEILESVDVVKEKEAGEFRFPVQYVNRPNLDFRGFAGTISSGVVKVGDRITALPSGKSSTVARIVTFDGDLEQAQAGLAVTLTLADEIDISRGDLIVHHGANVELTNHLAADVVWMTEQPLQPGRDYDIKIAGKKTIGRVEHIHHQYDINNLSKHSAAELPLNGIGLCEWTFNESIALDNYQDCADTGGFIIIDRLTNVTVGAGMVSESLTEVTKASSDFSAFELELNALIRKHFPHWDAKDLSELLKK.

The region spanning 24–228 (KSLLRFLTCG…MAWYQGPTLL (205 aa)) is the tr-type G domain. The G1 stretch occupies residues 33-40 (GSVDDGKS). 33 to 40 (GSVDDGKS) contributes to the GTP binding site. Positions 91–95 (GITID) are G2. Positions 112 to 115 (DTPG) are G3. Residues 112–116 (DTPGH) and 167–170 (NKMD) each bind GTP. Residues 167 to 170 (NKMD) are G4. Residues 205 to 207 (SAL) form a G5 region.

Belongs to the TRAFAC class translation factor GTPase superfamily. Classic translation factor GTPase family. CysN/NodQ subfamily. As to quaternary structure, heterodimer composed of CysD, the smaller subunit, and CysN.

It catalyses the reaction sulfate + ATP + H(+) = adenosine 5'-phosphosulfate + diphosphate. It functions in the pathway sulfur metabolism; hydrogen sulfide biosynthesis; sulfite from sulfate: step 1/3. Functionally, with CysD forms the ATP sulfurylase (ATPS) that catalyzes the adenylation of sulfate producing adenosine 5'-phosphosulfate (APS) and diphosphate, the first enzymatic step in sulfur assimilation pathway. APS synthesis involves the formation of a high-energy phosphoric-sulfuric acid anhydride bond driven by GTP hydrolysis by CysN coupled to ATP hydrolysis by CysD. The chain is Sulfate adenylyltransferase subunit 1 from Vibrio vulnificus (strain CMCP6).